The chain runs to 387 residues: Calcium sensing receptor, chloroplastic (387 aa).

A chloroplast-targeting transit peptide spans 1 to 33; that stretch reads MAMAEMATKSSLSAKLTLPSSSTKKTLSLRQVS. Residues 34–186 lie on the Lumenal, thylakoid side of the membrane; the sequence is VSLPTSTSIS…TMDTISSADP (153 aa). Residues 187–207 traverse the membrane as a helical segment; the sequence is SVIVVAAGAAFLAYLLLPPVF. Residues 208–387 lie on the Stromal side of the membrane; that stretch reads SAISFNFRGY…SGTKFLPSSD (180 aa). A Rhodanese domain is found at 231–352; the sequence is CTKNYLMVDI…WLQSRLGTDS (122 aa). Thr380 is subject to Phosphothreonine.

In terms of processing, phosphorylation seems to be light-dependent. In terms of tissue distribution, predominantly expressed in the shoot, including guard cells.

The protein localises to the plastid. It is found in the chloroplast thylakoid membrane. Functionally, modulates cytoplasmic Ca(2+) concentration and is crucial for proper stomatal regulation in response to elevated levels of external Ca(2+). May function by regulating concentrations of inositol 1,4,5-trisphosphate (IP3), which in turn triggers release of Ca(2+) from internal stores. May play a role in de-etiolation. This chain is Calcium sensing receptor, chloroplastic (CAS), found in Arabidopsis thaliana (Mouse-ear cress).